The primary structure comprises 362 residues: UV excision repair protein RAD23 homolog A (362 aa).

Positions 1–81 (MAVTITLKTL…VVVMVTKAKT (81 aa)) constitute a Ubiquitin-like domain. 2 disordered regions span residues 80 to 160 (KTSP…LVTG) and 201 to 227 (GIPG…TEAG). The span at 88–109 (PSEASPTATPESSTSFPSAPAS) shows a compositional bias: low complexity. Residue Lys-122 forms a Glycyl lysine isopeptide (Lys-Gly) (interchain with G-Cter in ubiquitin) linkage. Ser-123, Ser-128, Ser-133, Ser-136, and Ser-138 each carry phosphoserine. Low complexity predominate over residues 126 to 144 (EESAPTTSPESVSGSVPSS). Residues 161 to 201 (SEYETMLTEIMSMGYERERVVAALRASYNNPHRAVEYLLTG) form the UBA 1 domain. A phosphoserine mark is found at Ser-205, Ser-294, and Ser-356. A UBA 2 domain is found at 317–357 (PQEKEAIERLKALGFPESLVIQAYFACEKNENLAANFLLSQ).

The protein belongs to the RAD23 family. Interacts with XPC; the interaction is suggesting the existence of a functional equivalent variant XPC complex. Interacts with PSMD4 and PSMC5. Interacts with ATXN3. Interacts with UBQLN2.

It is found in the nucleus. Its function is as follows. Multiubiquitin chain receptor involved in modulation of proteasomal degradation. Binds to 'Lys-48'-linked polyubiquitin chains in a length-dependent manner and with a lower affinity to 'Lys-63'-linked polyubiquitin chains. Proposed to be capable to bind simultaneously to the 26S proteasome and to polyubiquitinated substrates and to deliver ubiquitinated proteins to the proteasome. Functionally, involved in nucleotide excision repair and is thought to be functional equivalent for RAD23B in global genome nucleotide excision repair (GG-NER) by association with XPC. In vitro, XPC:RAD23A dimer has NER activity. Can stabilize XPC. The chain is UV excision repair protein RAD23 homolog A (RAD23A) from Bos taurus (Bovine).